A 269-amino-acid polypeptide reads, in one-letter code: Regulatory protein RecX (269 aa).

Belongs to the RecX family.

Its subcellular location is the cytoplasm. Its function is as follows. Modulates RecA activity. This is Regulatory protein RecX from Geobacillus thermodenitrificans (strain NG80-2).